The primary structure comprises 271 residues: Autophagy-related protein 5 (271 aa).

Residue Lys-145 forms a Glycyl lysine isopeptide (Lys-Gly) (interchain with G-Cter in ATG12) linkage.

It belongs to the ATG5 family. In terms of assembly, conjugated with ATG12. Interacts with ATG10. The ATG5-ATG12 conjugate forms a complex with several units of ATG16. The ATG12-ATG5 conjugate also associates with ATG3. In terms of processing, conjugated to ATG12; which is essential for autophagy. Conjugation with ATG12 involves ATG7 as an E1-like activating enzyme and ATG10 as an E2-like conjugating enzyme.

It is found in the preautophagosomal structure membrane. In terms of biological role, involved in cytoplasm to vacuole transport (Cvt) and autophagic vesicle formation. Autophagy is essential for maintenance of amino acid levels and protein synthesis under nitrogen starvation. Required for selective autophagic degradation of the nucleus (nucleophagy). Also required for mitophagy, which eliminates defective or superfluous mitochondria in order to fulfill cellular energy requirements and prevent excess ROS production. Conjugation with ATG12, through a ubiquitin-like conjugating system involving ATG7 as an E1-like activating enzyme and ATG10 as an E2-like conjugating enzyme, is essential for its function. The ATG12-ATG5 conjugate acts as an E3-like enzyme which is required for lipidation of ATG8 and ATG8 association to the vesicle membranes. ATG12-ATG5 rearranges the ATG3 catalytic center and enhances its E2 activity. The chain is Autophagy-related protein 5 from Kluyveromyces marxianus (strain DMKU3-1042 / BCC 29191 / NBRC 104275) (Yeast).